The primary structure comprises 565 residues: MDWIVHQLRVHPELAIFLTLFVGFWIGKIKIGKFSLGVVTSVLLVGVLVGQLDITVDGPIKSVFFLLFLFAIGYKVGPQFFRGLKKDGLPQMGFAAIMCVFCLIIPWILAKIMGYNVGEAAGLLAGSQTISAVIGVAGDTINELNISPETKEAYNNIIPVSYAVTYIFGTAGSAWVLGSLGPRLLGGLDKVKAACKELEAKMGNNEADQPGFMAAARPVTFRAYKIANEWFGDGKRVSDLESYFQENDKRLFVERVRQAGVIVKEVSPTFVLKKGDEVVLSGRREYVIGEEDWIGPEVLDPQLLDFPAEVLPVMVTRKTVAGEKVSTIRALKFMHGVSIRRIKRAGIDIPVLAQTVVDAGDMVELVGTKHEVDAAAKQLGYADRPTNQTDMIFVGLGILIGGLIGALSIHMGGVPISLSTSGGALIGGLFFGWLRSKHPTFGRIPEPALWILDNVGLNMFIAVVGIAAGPSFVQGFKEVGLSLFIVGALATSIPLIAGILMAKYIFKFHPALVLGCTAGARTTTAALGAIQEAVESETPALGYTVTYAVGNTLLIIWGVVIVLLM.

Transmembrane regions (helical) follow at residues 14 to 34 (LAIF…IGKF), 36 to 56 (LGVV…DITV), 92 to 112 (MGFA…LAKI), 117 to 137 (VGEA…IGVA), and 157 to 177 (IIPV…AWVL). An RCK C-terminal domain is found at 296-381 (PEVLDPQLLD…VDAAAKQLGY (86 aa)). Transmembrane regions (helical) follow at residues 391–411 (MIFV…SIHM), 414–434 (VPIS…FGWL), 448–468 (ALWI…GIAA), 481–501 (LSLF…GILM), 508–530 (FHPA…LGAI), and 545–565 (VTYA…VLLM).

This sequence belongs to the AAE transporter (TC 2.A.81) family.

It is found in the cell membrane. This is an uncharacterized protein from Bacteroides fragilis (strain YCH46).